We begin with the raw amino-acid sequence, 201 residues long: Ribonuclease HII (201 aa).

Residues 12–201 enclose the RNase H type-2 domain; that stretch reads DLVAGVDEVG…VRELLDVSVQ (190 aa). A divalent metal cation-binding residues include aspartate 18, glutamate 19, and aspartate 110.

It belongs to the RNase HII family. Requires Mn(2+) as cofactor. It depends on Mg(2+) as a cofactor.

Its subcellular location is the cytoplasm. The catalysed reaction is Endonucleolytic cleavage to 5'-phosphomonoester.. Functionally, endonuclease that specifically degrades the RNA of RNA-DNA hybrids. This is Ribonuclease HII from Pseudomonas aeruginosa (strain LESB58).